We begin with the raw amino-acid sequence, 338 residues long: Nicotinate-nucleotide--dimethylbenzimidazole phosphoribosyltransferase (338 aa).

E305 serves as the catalytic Proton acceptor.

Belongs to the CobT family.

The catalysed reaction is 5,6-dimethylbenzimidazole + nicotinate beta-D-ribonucleotide = alpha-ribazole 5'-phosphate + nicotinate + H(+). It participates in nucleoside biosynthesis; alpha-ribazole biosynthesis; alpha-ribazole from 5,6-dimethylbenzimidazole: step 1/2. In terms of biological role, catalyzes the synthesis of alpha-ribazole-5'-phosphate from nicotinate mononucleotide (NAMN) and 5,6-dimethylbenzimidazole (DMB). This is Nicotinate-nucleotide--dimethylbenzimidazole phosphoribosyltransferase from Rhizobium etli (strain CIAT 652).